The chain runs to 377 residues: Nitric oxide reductase FlRd-NAD(+) reductase (377 aa).

Belongs to the FAD-dependent oxidoreductase family. FAD is required as a cofactor.

Its subcellular location is the cytoplasm. The enzyme catalyses 2 reduced [nitric oxide reductase rubredoxin domain] + NAD(+) + H(+) = 2 oxidized [nitric oxide reductase rubredoxin domain] + NADH. It functions in the pathway nitrogen metabolism; nitric oxide reduction. Functionally, one of at least two accessory proteins for anaerobic nitric oxide (NO) reductase. Reduces the rubredoxin moiety of NO reductase. This chain is Nitric oxide reductase FlRd-NAD(+) reductase, found in Salmonella arizonae (strain ATCC BAA-731 / CDC346-86 / RSK2980).